The chain runs to 288 residues: DegV domain-containing protein MYPU_3590 (288 aa).

Residues 3 to 275 (IAIVIDSSSG…LGAIAISLVK (273 aa)) enclose the DegV domain. Hexadecanoate-binding residues include Ser-61 and Ser-92.

Its function is as follows. May bind long-chain fatty acids, such as palmitate, and may play a role in lipid transport or fatty acid metabolism. The sequence is that of DegV domain-containing protein MYPU_3590 from Mycoplasmopsis pulmonis (strain UAB CTIP) (Mycoplasma pulmonis).